Reading from the N-terminus, the 212-residue chain is Transmembrane emp24 domain-containing protein p24delta7 (212 aa).

An N-terminal signal peptide occupies residues 1-22; the sequence is MNHRRSSIVLLILSILSPVTLS. Residues 23 to 179 lie on the Lumenal side of the membrane; that stretch reads IRYELLSGHT…HNLNIATNSK (157 aa). The region spanning 32–147 is the GOLD domain; the sequence is TKCISEEIHA…VETMEFEVKK (116 aa). Residues 162-175 are a coiled coil; it reads LRDREEEMHNLNIA. The residue at position 165 (arginine 165) is an Omega-N-methylated arginine. A helical transmembrane segment spans residues 180–200; the sequence is MAWLSFVSLAVCLSVAGLQFW. At 201–212 the chain is on the cytoplasmic side; sequence HLKTFFQKKKLI. The COPII vesicle coat-binding signature appears at 205–206; sequence FF. The COPI vesicle coat-binding signature appears at 205 to 212; the sequence is FFQKKKLI.

It belongs to the EMP24/GP25L family. Probably oligomerizes with other members of the EMP24/GP25L family. Associates with the COPI vesicle coat (coatomer). Associates with the COPII vesicle coat (coatomer).

Its subcellular location is the endoplasmic reticulum membrane. It localises to the golgi apparatus. It is found in the cis-Golgi network membrane. The protein localises to the golgi stack membrane. Involved in vesicular protein trafficking. Mainly functions in the early secretory pathway. Thought to act as cargo receptor at the lumenal side for incorporation of secretory cargo molecules into transport vesicles and to be involved in vesicle coat formation at the cytoplasmic side. This Arabidopsis thaliana (Mouse-ear cress) protein is Transmembrane emp24 domain-containing protein p24delta7.